Consider the following 448-residue polypeptide: MSKKVFIKTFGCQMNEYDSDKMADVLGAAQGYEPTDDPEQADLILFNTCSVREKAQEKVFSDLGRVKHLKDKGVLIGVGGCVASQEGEEIIKRAPFVDVVFGPQTLHRLPELLNARAAKARPQVDISFPEIEKFDHLPPARVEGASAFVSIMEGCSKYCSYCVVPYTRGEEVSRPFEDVLVEVAGLADQGVKEVTLLGQNVNAYLGAMGDTAEKADFALLLEYVAEIPGIERIRFTTSHPNEFTPRLIEAYAKIPKLVSHLHLPVQHGSDRILMAMKRGYTAMEYKSTIRKLRAIRPDMAMSSDFIVGFPGETEEDFQKMMKLIDDVRFDNSFSFIFSPRPGTPAANLHDDTPHEVKLRRLQELQAVINRNILEISQERVGTVQRLLVEGVSKRDGSELMGRTECNRVVNFPGHERLIGQMIDVKITEARTYTLRGEVVMGEVTTAVG.

The 116-residue stretch at 3–118 (KKVFIKTFGC…LPELLNARAA (116 aa)) folds into the MTTase N-terminal domain. Positions 12, 49, 81, 155, 159, and 162 each coordinate [4Fe-4S] cluster. Residues 141-374 (RVEGASAFVS…QAVINRNILE (234 aa)) enclose the Radical SAM core domain. A TRAM domain is found at 377–440 (QERVGTVQRL…TYTLRGEVVM (64 aa)).

This sequence belongs to the methylthiotransferase family. MiaB subfamily. Monomer. The cofactor is [4Fe-4S] cluster.

It is found in the cytoplasm. It catalyses the reaction N(6)-dimethylallyladenosine(37) in tRNA + (sulfur carrier)-SH + AH2 + 2 S-adenosyl-L-methionine = 2-methylsulfanyl-N(6)-dimethylallyladenosine(37) in tRNA + (sulfur carrier)-H + 5'-deoxyadenosine + L-methionine + A + S-adenosyl-L-homocysteine + 2 H(+). Functionally, catalyzes the methylthiolation of N6-(dimethylallyl)adenosine (i(6)A), leading to the formation of 2-methylthio-N6-(dimethylallyl)adenosine (ms(2)i(6)A) at position 37 in tRNAs that read codons beginning with uridine. The chain is tRNA-2-methylthio-N(6)-dimethylallyladenosine synthase from Acidovorax sp. (strain JS42).